We begin with the raw amino-acid sequence, 421 residues long: UDP-N-acetylglucosamine 1-carboxyvinyltransferase (421 aa).

26–27 (KN) contacts phosphoenolpyruvate. Arginine 96 provides a ligand contact to UDP-N-acetyl-alpha-D-glucosamine. Aspartate 120 serves as the catalytic Proton donor. UDP-N-acetyl-alpha-D-glucosamine contacts are provided by aspartate 308 and valine 330.

This sequence belongs to the EPSP synthase family. MurA subfamily.

It is found in the cytoplasm. The enzyme catalyses phosphoenolpyruvate + UDP-N-acetyl-alpha-D-glucosamine = UDP-N-acetyl-3-O-(1-carboxyvinyl)-alpha-D-glucosamine + phosphate. Its pathway is cell wall biogenesis; peptidoglycan biosynthesis. In terms of biological role, cell wall formation. Adds enolpyruvyl to UDP-N-acetylglucosamine. In Corynebacterium efficiens (strain DSM 44549 / YS-314 / AJ 12310 / JCM 11189 / NBRC 100395), this protein is UDP-N-acetylglucosamine 1-carboxyvinyltransferase.